The sequence spans 794 residues: Kinesin-like protein KIN-13A (794 aa).

In terms of domain architecture, Kinesin motor spans K193–L526. G282–T289 is a binding site for ATP. The segment at S525 to T699 is disordered. Basic and acidic residues predominate over residues E569–S579. Polar residues-rich tracts occupy residues N580 to N593 and E611 to E632. A compositionally biased stretch (basic and acidic residues) spans G650–S668. Positions S669–Q696 are enriched in polar residues. The stretch at E705 to V742 forms a coiled coil.

It belongs to the TRAFAC class myosin-kinesin ATPase superfamily. Kinesin family. KIN-13 subfamily. As to quaternary structure, component of the active ARAC10-IRC5-KIN13A complex. Interacts (via-C-terminus) with ICR2 and ICR5 (via N-terminus). No interactions with ICR1. As to expression, expressed in leaves, roots, young and mature seedlings. Preferentially expressed in the secondary cell wall pits of differentiating metaxylem vessel cells (at the protein level).

It localises to the golgi apparatus. The protein localises to the golgi stack. Its subcellular location is the cytoplasm. It is found in the cytoskeleton. In terms of biological role, internal motor kinesin involved in trichome morphogenesis. Participates in regulating the formation of Golgi-associated vesicles. Plays a central role in microtubule disassembly via the active ARAC10-ICR5 cascade, which establishes the secondary cell wall pattern in metaxylem vessel cells. Acts redundantly with KIN13B to modulate cell wall synthesis and cell expansion via the THE1 pathway. The sequence is that of Kinesin-like protein KIN-13A from Arabidopsis thaliana (Mouse-ear cress).